The chain runs to 122 residues: Ribosome-binding factor A (122 aa).

It belongs to the RbfA family. As to quaternary structure, monomer. Binds 30S ribosomal subunits, but not 50S ribosomal subunits or 70S ribosomes.

The protein resides in the cytoplasm. In terms of biological role, one of several proteins that assist in the late maturation steps of the functional core of the 30S ribosomal subunit. Associates with free 30S ribosomal subunits (but not with 30S subunits that are part of 70S ribosomes or polysomes). Required for efficient processing of 16S rRNA. May interact with the 5'-terminal helix region of 16S rRNA. The chain is Ribosome-binding factor A from Polynucleobacter necessarius subsp. necessarius (strain STIR1).